A 32-amino-acid polypeptide reads, in one-letter code: Delta-conotoxin-like CnVID (32 aa).

Cystine bridges form between Cys-3–Cys-18, Cys-10–Cys-22, and Cys-17–Cys-27. Pro-6 and Pro-14 each carry 4-hydroxyproline.

This sequence belongs to the conotoxin O1 superfamily. As to expression, expressed by the venom duct.

Its subcellular location is the secreted. Its function is as follows. Delta-conotoxins bind to site 6 of voltage-gated sodium channels (Nav) and inhibit the inactivation process. This toxin acts on Nav1.2/SCN2A, Nav1.3/SCN3A and Nav1.6/SCN8A (EC(50)=1.7 uM). The protein is Delta-conotoxin-like CnVID of Conus consors (Singed cone).